Here is a 126-residue protein sequence, read N- to C-terminus: Aspartate 1-decarboxylase (126 aa).

The Schiff-base intermediate with substrate; via pyruvic acid role is filled by Ser-25. A Pyruvic acid (Ser) modification is found at Ser-25. Thr-57 contacts substrate. Tyr-58 functions as the Proton donor in the catalytic mechanism. 73–75 (GAA) lines the substrate pocket.

It belongs to the PanD family. As to quaternary structure, heterooctamer of four alpha and four beta subunits. Requires pyruvate as cofactor. In terms of processing, is synthesized initially as an inactive proenzyme, which is activated by self-cleavage at a specific serine bond to produce a beta-subunit with a hydroxyl group at its C-terminus and an alpha-subunit with a pyruvoyl group at its N-terminus.

Its subcellular location is the cytoplasm. It catalyses the reaction L-aspartate + H(+) = beta-alanine + CO2. It functions in the pathway cofactor biosynthesis; (R)-pantothenate biosynthesis; beta-alanine from L-aspartate: step 1/1. Functionally, catalyzes the pyruvoyl-dependent decarboxylation of aspartate to produce beta-alanine. In Methylococcus capsulatus (strain ATCC 33009 / NCIMB 11132 / Bath), this protein is Aspartate 1-decarboxylase.